The primary structure comprises 466 residues: ATP synthase subunit beta (466 aa).

148 to 155 contacts ATP; that stretch reads GGAGVGKT.

Belongs to the ATPase alpha/beta chains family. In terms of assembly, F-type ATPases have 2 components, CF(1) - the catalytic core - and CF(0) - the membrane proton channel. CF(1) has five subunits: alpha(3), beta(3), gamma(1), delta(1), epsilon(1). CF(0) has three main subunits: a(1), b(2) and c(9-12). The alpha and beta chains form an alternating ring which encloses part of the gamma chain. CF(1) is attached to CF(0) by a central stalk formed by the gamma and epsilon chains, while a peripheral stalk is formed by the delta and b chains.

Its subcellular location is the cell inner membrane. The catalysed reaction is ATP + H2O + 4 H(+)(in) = ADP + phosphate + 5 H(+)(out). Produces ATP from ADP in the presence of a proton gradient across the membrane. The catalytic sites are hosted primarily by the beta subunits. This is ATP synthase subunit beta from Xylella fastidiosa (strain M12).